A 196-amino-acid chain; its full sequence is Large ribosomal subunit protein eL15 (196 aa).

Positions 154 to 196 are disordered; that stretch reads PGHRGRSERGLTSAGVKGRGMRRRGKGTEKCRPSVRANANRAK.

It belongs to the eukaryotic ribosomal protein eL15 family.

This chain is Large ribosomal subunit protein eL15, found in Methanospirillum hungatei JF-1 (strain ATCC 27890 / DSM 864 / NBRC 100397 / JF-1).